We begin with the raw amino-acid sequence, 872 residues long: MSSFHFYFPSVGLFSFFCFFLVSLATEPHIGLGSKLKASEPNRAWVSANGTFAIGFTRFKPTDRFLLSIWFAQLPGDPTIVWSPNRNSPVTKEAVLELEATGNLVLSDQNTVVWTSNTSNHGVESAVMSESGNFLLLGTEVTAGPTIWQSFSQPSDTLLPNQPLTVSLELTSNPSPSRHGHYSLKMLQQHTSLSLGLTYNINLDPHANYSYWSGPDISNVTGDVTAVLDDTGSFKIVYGESSIGAVYVYKNPVDDNRNYNNSSNLGLTKNPVLRRLVLENNGNLRLYRWDNDMNGSSQWVPEWAAVSNPCDIAGICGNGVCNLDRTKKNADCLCLPGSVKLPDQENAKLCSDNSSLVQECESNINRNGSFKISTVQETNYYFSERSVIENISDISNVRKCGEMCLSDCKCVASVYGLDDEKPYCWILKSLNFGGFRDPGSTLFVKTRANESYPSNSNNNDSKSRKSHGLRQKVLVIPIVVGMLVLVALLGMLLYYNLDRKRTLKRAAKNSLILCDSPVSFTYRDLQNCTNNFSQLLGSGGFGTVYKGTVAGETLVAVKRLDRALSHGEREFITEVNTIGSMHHMNLVRLCGYCSEDSHRLLVYEYMINGSLDKWIFSSEQTANLLDWRTRFEIAVATAQGIAYFHEQCRNRIIHCDIKPENILLDDNFCPKVSDFGLAKMMGREHSHVVTMIRGTRGYLAPEWVSNRPITVKADVYSYGMLLLEIVGGRRNLDMSYDAEDFFYPGWAYKELTNGTSLKAVDKRLQGVAEEEEVVKALKVAFWCIQDEVSMRPSMGEVVKLLEGTSDEINLPPMPQTILELIEEGLEDVYRAMRREFNNQLSSLTVNTITTSQSYRSSSRSHATCSYSSMSPR.

The N-terminal stretch at 1–25 is a signal peptide; it reads MSSFHFYFPSVGLFSFFCFFLVSLA. The Extracellular portion of the chain corresponds to 26–472; the sequence is TEPHIGLGSK…SRKSHGLRQK (447 aa). The Bulb-type lectin domain maps to 30-149; that stretch reads IGLGSKLKAS…EVTAGPTIWQ (120 aa). Residues asparagine 49, asparagine 117, asparagine 208, asparagine 219, asparagine 261, and asparagine 294 are each glycosylated (N-linked (GlcNAc...) asparagine). The EGF-like; atypical domain maps to 306 to 344; the sequence is VSNPCDIAGICGNGVCNLDRTKKNADCLCLPGSVKLPDQ. Intrachain disulfides connect cysteine 310-cysteine 321 and cysteine 316-cysteine 332. Residues asparagine 353, asparagine 367, and asparagine 390 are each glycosylated (N-linked (GlcNAc...) asparagine). A PAN domain is found at 360 to 447; the sequence is CESNINRNGS…PGSTLFVKTR (88 aa). Intrachain disulfides connect cysteine 400-cysteine 424 and cysteine 404-cysteine 410. 2 N-linked (GlcNAc...) asparagine glycosylation sites follow: asparagine 449 and asparagine 459. The helical transmembrane segment at 473 to 493 threads the bilayer; sequence VLVIPIVVGMLVLVALLGMLL. At 494-872 the chain is on the cytoplasmic side; the sequence is YYNLDRKRTL…TCSYSSMSPR (379 aa). A Phosphothreonine modification is found at threonine 521. Residues 530 to 810 form the Protein kinase domain; sequence NNFSQLLGSG…LEGTSDEINL (281 aa). ATP contacts are provided by residues 536–544 and lysine 558; that span reads LGSGGFGTV. Tyrosine 603 bears the Phosphotyrosine mark. The caM-binding stretch occupies residues 619-637; it reads EQTANLLDWRTRFEIAVAT. The Proton acceptor role is filled by aspartate 656. 2 positions are modified to phosphothreonine: threonine 690 and threonine 695.

It belongs to the protein kinase superfamily. Ser/Thr protein kinase family.

It localises to the cell membrane. It carries out the reaction L-seryl-[protein] + ATP = O-phospho-L-seryl-[protein] + ADP + H(+). The catalysed reaction is L-threonyl-[protein] + ATP = O-phospho-L-threonyl-[protein] + ADP + H(+). This Arabidopsis thaliana (Mouse-ear cress) protein is G-type lectin S-receptor-like serine/threonine-protein kinase At5g24080.